The sequence spans 957 residues: Collagen alpha-1(XXI) chain (957 aa).

The signal sequence occupies residues 1–22 (MAHYITFLCMVLVLLLQNSVLA). A VWFA domain is found at 37–211 (DLVFILDGSY…KIREVMKQKL (175 aa)). Asparagine 62 carries an N-linked (GlcNAc...) asparagine glycan. The region spanning 230–412 (GFDILLGLDV…VQKLRIYCDP (183 aa)) is the Laminin G-like domain. 3 consecutive Collagen-like domains span residues 448-500 (PGKP…GARG), 501-542 (LPGY…GDKG), and 543-594 (SPGF…SPGA). Disordered regions lie at residues 448–786 (PGKP…KPGR) and 825–938 (GSPG…ICDP). Low complexity-rich tracts occupy residues 451–462 (PGLQGPKGDPGL) and 471–481 (QPGQDGKPGYQ). Over residues 507-517 (EPGRDGDKGDR) the composition is skewed to basic and acidic residues. Low complexity-rich tracts occupy residues 618-637 (QKGE…PGMP) and 705-729 (EKGI…IQGH). 4 consecutive Collagen-like domains span residues 681 to 733 (SPGE…HGAK), 734 to 787 (GERG…PGRE), 825 to 882 (GSPG…GSQG), and 884 to 934 (GYPG…GPPG). Residues 732 to 742 (AKGERGEKGEP) are compositionally biased toward basic and acidic residues. Residues 829–838 (IPGPPGPIGP) show a composition bias toward pro residues. The span at 839–874 (EGPRGLPGLPGRDGVPGLVGVPGRPGVRGLKGLPGR) shows a compositional bias: low complexity. Residues 889–900 (QGPPGPPGPEGP) are compositionally biased toward pro residues.

It belongs to the fibril-associated collagens with interrupted helices (FACIT) family. In terms of tissue distribution, highly expressed in lymph node, jejunum, pancreas, stomach, trachea, testis, uterus and placenta; moderately expressed in brain, colon, lung, prostate, spinal cord, salivary gland and vascular smooth-muscle cells and very weakly expressed in heart, liver, kidney, bone marrow, spleen, thymus, skeletal muscle, adrenal gland and peripheral leukocytes. Expression in heart was higher in the right ventricle and atrium than in the left ventricle and atrium.

Its subcellular location is the secreted. It localises to the extracellular space. The protein resides in the extracellular matrix. The protein localises to the cytoplasm. This Homo sapiens (Human) protein is Collagen alpha-1(XXI) chain (COL21A1).